Reading from the N-terminus, the 286-residue chain is Aldo-keto reductase MAV_4483 (286 aa).

Y61 acts as the Proton donor in catalysis. Residues L201, V203, V239, R241, S242, R247, and N251 each contribute to the NADPH site.

The protein belongs to the aldo/keto reductase family.

The protein is Aldo-keto reductase MAV_4483 of Mycobacterium avium (strain 104).